Consider the following 166-residue polypeptide: Putative 4-hydroxy-4-methyl-2-oxoglutarate aldolase (166 aa).

Residues 74-77 (GDQI) and Arg-96 contribute to the substrate site. Position 97 (Asp-97) interacts with a divalent metal cation.

The protein belongs to the class II aldolase/RraA-like family. In terms of assembly, homotrimer. Requires a divalent metal cation as cofactor.

The catalysed reaction is 4-hydroxy-4-methyl-2-oxoglutarate = 2 pyruvate. It carries out the reaction oxaloacetate + H(+) = pyruvate + CO2. Functionally, catalyzes the aldol cleavage of 4-hydroxy-4-methyl-2-oxoglutarate (HMG) into 2 molecules of pyruvate. Also contains a secondary oxaloacetate (OAA) decarboxylase activity due to the common pyruvate enolate transition state formed following C-C bond cleavage in the retro-aldol and decarboxylation reactions. The sequence is that of Putative 4-hydroxy-4-methyl-2-oxoglutarate aldolase from Xanthomonas campestris pv. campestris (strain B100).